The primary structure comprises 199 residues: uncharacterized protein (199 aa).

This is an uncharacterized protein from Rattus norvegicus (Rat).